Reading from the N-terminus, the 224-residue chain is Large ribosomal subunit protein uL3 (224 aa).

Gln159 carries the N5-methylglutamine modification.

Belongs to the universal ribosomal protein uL3 family. As to quaternary structure, part of the 50S ribosomal subunit. Forms a cluster with proteins L14 and L19. Methylated by PrmB.

Its function is as follows. One of the primary rRNA binding proteins, it binds directly near the 3'-end of the 23S rRNA, where it nucleates assembly of the 50S subunit. This Herminiimonas arsenicoxydans protein is Large ribosomal subunit protein uL3.